A 98-amino-acid polypeptide reads, in one-letter code: NADH-ubiquinone oxidoreductase chain 4L (98 aa).

Helical transmembrane passes span Met1–Met21, Ser29–Leu49, and Ile61–Val81.

The protein belongs to the complex I subunit 4L family. Core subunit of respiratory chain NADH dehydrogenase (Complex I) which is composed of 45 different subunits.

It is found in the mitochondrion inner membrane. It carries out the reaction a ubiquinone + NADH + 5 H(+)(in) = a ubiquinol + NAD(+) + 4 H(+)(out). Core subunit of the mitochondrial membrane respiratory chain NADH dehydrogenase (Complex I) which catalyzes electron transfer from NADH through the respiratory chain, using ubiquinone as an electron acceptor. Part of the enzyme membrane arm which is embedded in the lipid bilayer and involved in proton translocation. In Urotrichus talpoides (Japanese shrew mole), this protein is NADH-ubiquinone oxidoreductase chain 4L (MT-ND4L).